Consider the following 320-residue polypeptide: ATP-dependent 6-phosphofructokinase (320 aa).

Gly12 serves as a coordination point for ATP. Arg22–Arg26 is a binding site for ADP. Residues Arg73–Phe74 and Gly103–Ser106 contribute to the ATP site. Asp104 lines the Mg(2+) pocket. Thr126–Asp128 contributes to the substrate binding site. Asp128 (proton acceptor) is an active-site residue. Residue Arg155 participates in ADP binding. Substrate is bound by residues Arg163 and Met170–Arg172. Residues Gly186–Glu188, Lys212, and Lys214–His216 each bind ADP. Substrate is bound by residues Glu223, Arg244, and His250–Arg253.

Belongs to the phosphofructokinase type A (PFKA) family. ATP-dependent PFK group I subfamily. Prokaryotic clade 'B1' sub-subfamily. As to quaternary structure, homotetramer. Requires Mg(2+) as cofactor.

It localises to the cytoplasm. The enzyme catalyses beta-D-fructose 6-phosphate + ATP = beta-D-fructose 1,6-bisphosphate + ADP + H(+). Its pathway is carbohydrate degradation; glycolysis; D-glyceraldehyde 3-phosphate and glycerone phosphate from D-glucose: step 3/4. With respect to regulation, allosterically activated by ADP and other diphosphonucleosides, and allosterically inhibited by phosphoenolpyruvate. Catalyzes the phosphorylation of D-fructose 6-phosphate to fructose 1,6-bisphosphate by ATP, the first committing step of glycolysis. The polypeptide is ATP-dependent 6-phosphofructokinase (Photobacterium profundum (strain SS9)).